Consider the following 224-residue polypeptide: 2-C-methyl-D-erythritol 4-phosphate cytidylyltransferase (224 aa).

Belongs to the IspD/TarI cytidylyltransferase family. IspD subfamily.

It catalyses the reaction 2-C-methyl-D-erythritol 4-phosphate + CTP + H(+) = 4-CDP-2-C-methyl-D-erythritol + diphosphate. It participates in isoprenoid biosynthesis; isopentenyl diphosphate biosynthesis via DXP pathway; isopentenyl diphosphate from 1-deoxy-D-xylulose 5-phosphate: step 2/6. Catalyzes the formation of 4-diphosphocytidyl-2-C-methyl-D-erythritol from CTP and 2-C-methyl-D-erythritol 4-phosphate (MEP). This Caldicellulosiruptor saccharolyticus (strain ATCC 43494 / DSM 8903 / Tp8T 6331) protein is 2-C-methyl-D-erythritol 4-phosphate cytidylyltransferase.